A 362-amino-acid chain; its full sequence is Isopentenyl-diphosphate delta-isomerase (362 aa).

Residue 5 to 6 participates in substrate binding; sequence RK. Residues 63-65, serine 93, and asparagine 122 each bind FMN; that span reads AMT. Glutamine 152 is a binding site for substrate. A Mg(2+)-binding site is contributed by glutamate 153. Residues lysine 184, threonine 214, 259-261, and 280-281 contribute to the FMN site; these read GIR and AG.

It belongs to the IPP isomerase type 2 family. As to quaternary structure, homooctamer. Dimer of tetramers. It depends on FMN as a cofactor. The cofactor is NADPH. Requires Mg(2+) as cofactor.

Its subcellular location is the cytoplasm. It catalyses the reaction isopentenyl diphosphate = dimethylallyl diphosphate. Functionally, involved in the biosynthesis of isoprenoids. Catalyzes the 1,3-allylic rearrangement of the homoallylic substrate isopentenyl (IPP) to its allylic isomer, dimethylallyl diphosphate (DMAPP). The chain is Isopentenyl-diphosphate delta-isomerase from Nocardia farcinica (strain IFM 10152).